Reading from the N-terminus, the 430-residue chain is Toxin coregulated pilus biosynthesis protein B (430 aa).

A compositionally biased stretch (polar residues) spans 351 to 366; it reads NFSSESAKDSQGTTQK. A disordered region spans residues 351–371; the sequence is NFSSESAKDSQGTTQKDGSKG.

Its function is as follows. Involved in TCP pilus biogenesis. This chain is Toxin coregulated pilus biosynthesis protein B (tcpB), found in Vibrio cholerae serotype O1 (strain ATCC 39315 / El Tor Inaba N16961).